The chain runs to 327 residues: Transaldolase (327 aa).

The active-site Schiff-base intermediate with substrate is the Lys132.

Belongs to the transaldolase family. Type 1 subfamily. Homodimer.

Its subcellular location is the cytoplasm. It carries out the reaction D-sedoheptulose 7-phosphate + D-glyceraldehyde 3-phosphate = D-erythrose 4-phosphate + beta-D-fructose 6-phosphate. It functions in the pathway carbohydrate degradation; pentose phosphate pathway; D-glyceraldehyde 3-phosphate and beta-D-fructose 6-phosphate from D-ribose 5-phosphate and D-xylulose 5-phosphate (non-oxidative stage): step 2/3. Functionally, transaldolase is important for the balance of metabolites in the pentose-phosphate pathway. This chain is Transaldolase, found in Chlamydia caviae (strain ATCC VR-813 / DSM 19441 / 03DC25 / GPIC) (Chlamydophila caviae).